Reading from the N-terminus, the 288-residue chain is Bifunctional protein FolD (288 aa).

Residues 166-168 and isoleucine 232 each bind NADP(+); that span reads GAS.

Belongs to the tetrahydrofolate dehydrogenase/cyclohydrolase family. As to quaternary structure, homodimer.

The enzyme catalyses (6R)-5,10-methylene-5,6,7,8-tetrahydrofolate + NADP(+) = (6R)-5,10-methenyltetrahydrofolate + NADPH. It carries out the reaction (6R)-5,10-methenyltetrahydrofolate + H2O = (6R)-10-formyltetrahydrofolate + H(+). Its pathway is one-carbon metabolism; tetrahydrofolate interconversion. In terms of biological role, catalyzes the oxidation of 5,10-methylenetetrahydrofolate to 5,10-methenyltetrahydrofolate and then the hydrolysis of 5,10-methenyltetrahydrofolate to 10-formyltetrahydrofolate. The sequence is that of Bifunctional protein FolD from Salmonella heidelberg (strain SL476).